The chain runs to 2004 residues: Alpha-2-macroglobulin homolog (2004 aa).

An N-terminal signal peptide occupies residues 1–27; the sequence is MLCCLVFKGLLSMDLLRFLLISPFALI.

The protein belongs to the protease inhibitor I39 (alpha-2-macroglobulin) family. Bacterial alpha-2-macroglobulin subfamily.

This chain is Alpha-2-macroglobulin homolog, found in Yersinia pestis.